Here is a 538-residue protein sequence, read N- to C-terminus: Tryptophan 7-halogenase PrnA (538 aa).

Residues G13, T15, A16, S39, I42, I45, E49, and A50 each contribute to the FAD site. K79 is an active-site residue. Residue K79 participates in 7-chloro-L-tryptophan binding. Residues V187 and L337 each coordinate FAD. E346 is a binding site for 7-chloro-L-tryptophan. E346 serves as a coordination point for L-tryptophan. Positions 348 and 349 each coordinate chloride. FAD is bound at residue I350. The 7-chloro-L-tryptophan site is built by Y443, Y444, E450, and F454. The L-tryptophan site is built by Y443, Y444, E450, and F454.

This sequence belongs to the flavin-dependent halogenase family. Bacterial tryptophan halogenase subfamily. Homodimer.

The enzyme catalyses L-tryptophan + FADH2 + chloride + O2 = 7-chloro-L-tryptophan + FAD + 2 H2O. It participates in antibiotic biosynthesis. In terms of biological role, involved in the biosynthesis of the antifungal antibiotic pyrrolnitrin. Catalyzes the chlorination of tryptophan (Trp) at C7 position to yield 7-chloro-L-tryptophan (7-CLT). The protein is Tryptophan 7-halogenase PrnA of Pseudomonas fluorescens.